The following is a 545-amino-acid chain: CTP synthase (545 aa).

The segment at 1 to 266 (MTTKYIFVTG…DEICVKRFGL (266 aa)) is amidoligase domain. Ser14 is a binding site for CTP. Ser14 serves as a coordination point for UTP. Residues 15–20 (SLGKGI) and Asp72 contribute to the ATP site. Positions 72 and 140 each coordinate Mg(2+). Residues 147–149 (DIE), 187–192 (KTKPTQ), and Lys223 each bind CTP. Residues 187-192 (KTKPTQ) and Lys223 each bind UTP. Position 239-241 (239-241 (RDV)) interacts with ATP. A Glutamine amidotransferase type-1 domain is found at 291 to 542 (IIGMVGKYTE…IKSAIDHQQG (252 aa)). Gly352 is an L-glutamine binding site. The Nucleophile; for glutamine hydrolysis role is filled by Cys379. Residues 380-383 (LGMQ), Glu403, and Arg470 contribute to the L-glutamine site. Residues His515 and Glu517 contribute to the active site.

This sequence belongs to the CTP synthase family. As to quaternary structure, homotetramer.

It catalyses the reaction UTP + L-glutamine + ATP + H2O = CTP + L-glutamate + ADP + phosphate + 2 H(+). The enzyme catalyses L-glutamine + H2O = L-glutamate + NH4(+). It carries out the reaction UTP + NH4(+) + ATP = CTP + ADP + phosphate + 2 H(+). It functions in the pathway pyrimidine metabolism; CTP biosynthesis via de novo pathway; CTP from UDP: step 2/2. Allosterically activated by GTP, when glutamine is the substrate; GTP has no effect on the reaction when ammonia is the substrate. The allosteric effector GTP functions by stabilizing the protein conformation that binds the tetrahedral intermediate(s) formed during glutamine hydrolysis. Inhibited by the product CTP, via allosteric rather than competitive inhibition. In terms of biological role, catalyzes the ATP-dependent amination of UTP to CTP with either L-glutamine or ammonia as the source of nitrogen. Regulates intracellular CTP levels through interactions with the four ribonucleotide triphosphates. The protein is CTP synthase of Psychromonas ingrahamii (strain DSM 17664 / CCUG 51855 / 37).